The sequence spans 172 residues: Dual-action ribosomal maturation protein DarP (172 aa).

It belongs to the DarP family.

The protein localises to the cytoplasm. Functionally, member of a network of 50S ribosomal subunit biogenesis factors which assembles along the 30S-50S interface, preventing incorrect 23S rRNA structures from forming. Promotes peptidyl transferase center (PTC) maturation. The protein is Dual-action ribosomal maturation protein DarP of Azotobacter vinelandii (strain DJ / ATCC BAA-1303).